We begin with the raw amino-acid sequence, 500 residues long: Cytochrome P450 71B38 (500 aa).

A helical transmembrane segment spans residues 3-23 (IFLCFLLLLPLSLILFKKLLP). Residue cysteine 441 coordinates heme.

This sequence belongs to the cytochrome P450 family. Heme is required as a cofactor.

Its subcellular location is the membrane. The polypeptide is Cytochrome P450 71B38 (CYP71B38) (Arabidopsis thaliana (Mouse-ear cress)).